A 677-amino-acid chain; its full sequence is DNA ligase (677 aa).

Residues 35–39, 84–85, and E116 contribute to the NAD(+) site; these read DAEYD and SL. The active-site N6-AMP-lysine intermediate is K118. Residues R139, E176, K295, and K319 each coordinate NAD(+). Zn(2+) contacts are provided by C413, C416, C431, and C437. Residues 596 to 677 enclose the BRCT domain; sequence LDELPLAGQV…MLAMFADLEG (82 aa).

This sequence belongs to the NAD-dependent DNA ligase family. LigA subfamily. It depends on Mg(2+) as a cofactor. Requires Mn(2+) as cofactor.

The catalysed reaction is NAD(+) + (deoxyribonucleotide)n-3'-hydroxyl + 5'-phospho-(deoxyribonucleotide)m = (deoxyribonucleotide)n+m + AMP + beta-nicotinamide D-nucleotide.. Its function is as follows. DNA ligase that catalyzes the formation of phosphodiester linkages between 5'-phosphoryl and 3'-hydroxyl groups in double-stranded DNA using NAD as a coenzyme and as the energy source for the reaction. It is essential for DNA replication and repair of damaged DNA. This chain is DNA ligase, found in Pseudoalteromonas atlantica (strain T6c / ATCC BAA-1087).